A 280-amino-acid polypeptide reads, in one-letter code: Lipase chaperone (280 aa).

A helical membrane pass occupies residues Ala5–Leu22.

This sequence belongs to the lipase chaperone family.

It is found in the cell inner membrane. Its function is as follows. May be involved in the folding of the extracellular lipase during its passage through the periplasm. The chain is Lipase chaperone (lifO) from Vibrio vulnificus (strain CMCP6).